The chain runs to 841 residues: Protein translocase subunit SecA (841 aa).

ATP contacts are provided by residues Gln-85, 103–107, and Asp-492; that span reads GEGKT. The disordered stretch occupies residues 786-812; that stretch reads REEVVQGQTTAHQPQDGDEAKQAKKAP. Zn(2+) is bound by residues Cys-825, Cys-827, Cys-836, and Cys-837.

The protein belongs to the SecA family. In terms of assembly, monomer and homodimer. Part of the essential Sec protein translocation apparatus which comprises SecA, SecYEG and auxiliary proteins SecDF. Other proteins may also be involved. Zn(2+) is required as a cofactor.

The protein localises to the cell membrane. The protein resides in the cytoplasm. It carries out the reaction ATP + H2O + cellular proteinSide 1 = ADP + phosphate + cellular proteinSide 2.. Its function is as follows. Part of the Sec protein translocase complex. Interacts with the SecYEG preprotein conducting channel. Has a central role in coupling the hydrolysis of ATP to the transfer of proteins into and across the cell membrane, serving as an ATP-driven molecular motor driving the stepwise translocation of polypeptide chains across the membrane. The polypeptide is Protein translocase subunit SecA (Bacillus velezensis (strain DSM 23117 / BGSC 10A6 / LMG 26770 / FZB42) (Bacillus amyloliquefaciens subsp. plantarum)).